Reading from the N-terminus, the 220-residue chain is Putative tyrosine-protein phosphatase 1 (220 aa).

The 152-residue stretch at 67–218 (FKVPLNAELF…LLARKHVRGQ (152 aa)) folds into the Tyrosine-protein phosphatase domain.

Belongs to the protein-tyrosine phosphatase family. Non-receptor class CDC14 subfamily.

It catalyses the reaction O-phospho-L-tyrosyl-[protein] + H2O = L-tyrosyl-[protein] + phosphate. Its function is as follows. Could be inactive as the active site cysteine is modified to tryptophan. The sequence is that of Putative tyrosine-protein phosphatase 1 (PTP-1) from Orgyia pseudotsugata multicapsid polyhedrosis virus (OpMNPV).